A 455-amino-acid polypeptide reads, in one-letter code: uncharacterized protein (455 aa).

Low complexity predominate over residues 1–20 (MGCCLSKKPSPSLPSSVKPS). 2 disordered regions span residues 1 to 234 (MGCC…IPAT) and 258 to 304 (RIAA…QNTK). Basic and acidic residues-rich tracts occupy residues 35-46 (EEAKPKSEKLNQ), 61-75 (SHEE…DKDS), 129-143 (RSFD…RGGD), 156-166 (RGVERVHGSPR), and 173-186 (PSRE…RERG). Polar residues predominate over residues 213 to 224 (SCGSSVNSSNNR). Residues 260-271 (AASPRSKSPARA) are compositionally biased toward low complexity.

This is an uncharacterized protein from Arabidopsis thaliana (Mouse-ear cress).